We begin with the raw amino-acid sequence, 478 residues long: Glutamine synthetase (478 aa).

An Isoglutamyl lysine isopeptide (Lys-Gln) (interchain with Q-Cter in protein Pup) cross-link involves residue Lys14. Residues 16-100 (ENVEYVDIRF…MNFFVHDPFT (85 aa)) form the GS beta-grasp domain. Positions 108-478 (PRNVARKAEN…PYEFSLYYDV (371 aa)) constitute a GS catalytic domain. Positions 133 and 135 each coordinate Mg(2+). An ATP-binding site is contributed by Glu214. Positions 219 and 227 each coordinate Mg(2+). An ATP-binding site is contributed by 230–232 (YKF). L-glutamate contacts are provided by residues 271-272 (NG) and Gly272. His276 is a binding site for Mg(2+). ATP-binding positions include 278–280 (HQS) and Ser280. L-glutamate-binding residues include Arg329, Glu335, and Arg347. Residues Arg347, Arg352, and Lys361 each coordinate ATP. Glu366 is a Mg(2+) binding site. Arg368 lines the L-glutamate pocket. An O-AMP-tyrosine modification is found at Tyr406.

This sequence belongs to the glutamine synthetase family. In terms of assembly, oligomer of 12 subunits arranged in the form of two hexagons. Mg(2+) is required as a cofactor.

It is found in the cytoplasm. It carries out the reaction L-glutamate + NH4(+) + ATP = L-glutamine + ADP + phosphate + H(+). With respect to regulation, when cellular nitrogen levels are high, the C-terminal adenylyl transferase (AT) of GlnE inhibits GlnA by covalent transfer of an adenylyl group from ATP to Tyr-406. Conversely, when nitrogen levels are low, the N-terminal adenylyl removase (AR) of GlnE activates GlnA by removing the adenylyl group by phosphorolysis. The fully adenylated enzyme complex is inactive. In terms of biological role, involved in nitrogen metabolism via ammonium assimilation. Catalyzes the ATP-dependent biosynthesis of glutamine from glutamate and ammonia. The polypeptide is Glutamine synthetase (Mycolicibacterium smegmatis (strain ATCC 700084 / mc(2)155) (Mycobacterium smegmatis)).